A 183-amino-acid chain; its full sequence is Adenine phosphoribosyltransferase (183 aa).

Belongs to the purine/pyrimidine phosphoribosyltransferase family. In terms of assembly, homodimer.

The protein resides in the cytoplasm. It carries out the reaction AMP + diphosphate = 5-phospho-alpha-D-ribose 1-diphosphate + adenine. It participates in purine metabolism; AMP biosynthesis via salvage pathway; AMP from adenine: step 1/1. Catalyzes a salvage reaction resulting in the formation of AMP, that is energically less costly than de novo synthesis. The polypeptide is Adenine phosphoribosyltransferase (Salmonella gallinarum (strain 287/91 / NCTC 13346)).